A 735-amino-acid chain; its full sequence is Dolichyl-diphosphooligosaccharide--protein glycosyltransferase subunit STT3B (735 aa).

Topologically, residues 1–38 (MGGKSEPAKSESMATKPDLLNTSFFSFKSLKLKTKQQE) are cytoplasmic. Residues 39 to 59 (LLLRISILGLVYILAFIARLF) form a helical membrane-spanning segment. Topologically, residues 60-142 (SVLRYESMIH…VHIREVCVLT (83 aa)) are lumenal. The short motif at 70–72 (EFD) is the DXD motif 1 element. Residue aspartate 72 participates in Mn(2+) binding. The chain crosses the membrane as a helical span at residues 143–161 (APFFASNTTLVAYFFGKEL). At 162 to 163 (WD) the chain is on the cytoplasmic side. The helical transmembrane segment at 164–181 (TGAGLVAAVLIAICPGYI) threads the bilayer. Topologically, residues 182–192 (SRSVAGSYDNE) are lumenal. 2 residues coordinate Mn(2+): aspartate 190 and glutamate 192. Positions 190 to 192 (DNE) match the DXD motif 2 motif. The chain crosses the membrane as a helical span at residues 193-212 (AVAIFALLLTFYLFVKAVNT). Over 213-214 (GS) the chain is Cytoplasmic. A helical transmembrane segment spans residues 215-229 (LAWALASAFGYFYMV). Over 230–234 (SAWGG) the chain is Lumenal. A helical membrane pass occupies residues 235–251 (YVFIINLVPLYVLVLLI). Over 252-256 (TGRYS) the chain is Cytoplasmic. A helical transmembrane segment spans residues 257–282 (MRLYIAYNCMYILGMLLAMQIRFVGF). At 283 to 290 (QHVQSGEH) the chain is on the lumenal side. A helical membrane pass occupies residues 291 to 310 (MGAMGVFLLMQVFYFLDWVK). At 311-326 (YQLNDTKLFQTFLRIT) the chain is on the cytoplasmic side. The chain crosses the membrane as a helical span at residues 327–347 (VTSAILVGGVAVGVGTASGYI). The Lumenal portion of the chain corresponds to 348–380 (SPWTGRFYSLLDPTYAKDHIPIIASVSEHQPTA). An SVSE motif motif is present at residues 372 to 375 (SVSE). Residues 381-403 (WSSFMFDYHILLFLFPAGLYFCF) traverse the membrane as a helical segment. The Cytoplasmic portion of the chain corresponds to 404–409 (KRLTDA). A helical membrane pass occupies residues 410 to 426 (TIFIVMYGLTSLYFAGV). At 427–430 (MVRL) the chain is on the lumenal side. Residue arginine 429 coordinates dolichyl diphosphooligosaccharide. A helical membrane pass occupies residues 431-452 (ILVATPAVCLISAIAVSATIKN). The Cytoplasmic segment spans residues 453–494 (LTSLLRTKQKVSQTGSTKGAGSSKASSKVTLDQSQPFQKNGA). Residues 495 to 515 (IALLVGVFYLLSRYAIHCTWV) traverse the membrane as a helical segment. Topologically, residues 516–735 (TAEAYSSPSI…YRVKPPTNRL (220 aa)) are lumenal. Residues 562 to 564 (WWD) are interacts with target acceptor peptide in protein substrate. A WWDYG motif motif is present at residues 562-566 (WWDYG). Position 567 (tyrosine 567) interacts with dolichyl diphosphooligosaccharide. Residues asparagine 574 and asparagine 581 are each glycosylated (N-linked (GlcNAc...) asparagine). N-linked (GlcNAc...) (high mannose) asparagine glycosylation occurs at asparagine 585. Positions 629–636 (DINKFLWM) match the DK motif motif.

This sequence belongs to the STT3 family. As to quaternary structure, component of the oligosaccharyltransferase (OST) complex. Mg(2+) serves as cofactor. Mn(2+) is required as a cofactor. Expressed preferentially in the root but also in the shoot.

It is found in the endoplasmic reticulum membrane. It carries out the reaction a di-trans,poly-cis-dolichyl diphosphooligosaccharide + L-asparaginyl-[protein] = N(4)-(oligosaccharide-(1-&gt;4)-N-acetyl-beta-D-glucosaminyl-(1-&gt;4)-N-acetyl-beta-D-glucosaminyl)-L-asparaginyl-[protein] + a di-trans,poly-cis-dolichyl diphosphate + H(+). Its pathway is protein modification; protein glycosylation. In terms of biological role, catalytic subunit of the oligosaccharyl transferase (OST) complex that catalyzes the initial transfer of a defined glycan (Glc(3)Man(9)GlcNAc(2) in eukaryotes) from the lipid carrier dolichol-pyrophosphate to an asparagine residue within an Asn-X-Ser/Thr consensus motif in nascent polypeptide chains, the first step in protein N-glycosylation. N-glycosylation occurs cotranslationally and the complex associates with the Sec61 complex at the channel-forming translocon complex that mediates protein translocation across the endoplasmic reticulum (ER). All subunits are required for a maximal enzyme activity. This subunit contains the active site and the acceptor peptide and donor lipid-linked oligosaccharide (LLO) binding pockets. The polypeptide is Dolichyl-diphosphooligosaccharide--protein glycosyltransferase subunit STT3B (STT3B) (Arabidopsis thaliana (Mouse-ear cress)).